Here is a 247-residue protein sequence, read N- to C-terminus: 5'-nucleotidase SurE (247 aa).

Positions 8, 9, 39, and 91 each coordinate a divalent metal cation.

This sequence belongs to the SurE nucleotidase family. Requires a divalent metal cation as cofactor.

It localises to the cytoplasm. It carries out the reaction a ribonucleoside 5'-phosphate + H2O = a ribonucleoside + phosphate. Nucleotidase that shows phosphatase activity on nucleoside 5'-monophosphates. This Nitrosomonas europaea (strain ATCC 19718 / CIP 103999 / KCTC 2705 / NBRC 14298) protein is 5'-nucleotidase SurE.